A 100-amino-acid chain; its full sequence is Small ribosomal subunit protein uS14c (100 aa).

The protein belongs to the universal ribosomal protein uS14 family. In terms of assembly, part of the 30S ribosomal subunit.

The protein localises to the plastid. It is found in the chloroplast. Functionally, binds 16S rRNA, required for the assembly of 30S particles. The protein is Small ribosomal subunit protein uS14c of Chlamydomonas reinhardtii (Chlamydomonas smithii).